Consider the following 68-residue polypeptide: Ribosome modulation factor (68 aa).

Belongs to the ribosome modulation factor family.

It localises to the cytoplasm. Its function is as follows. During stationary phase, converts 70S ribosomes to an inactive dimeric form (100S ribosomes). This is Ribosome modulation factor from Saccharophagus degradans (strain 2-40 / ATCC 43961 / DSM 17024).